The following is a 1894-amino-acid chain: 1,3-beta-glucan synthase component bgs2 (1894 aa).

2 disordered regions span residues M1 to K53 and G282 to S310. Over residues E32–S51 the composition is skewed to polar residues. Basic residues predominate over residues K286–S296. 16 consecutive transmembrane segments (helical) span residues V530 to I550, F566 to F586, V600 to L620, V655 to L675, I710 to W730, Y731 to W751, I1338 to Y1358, C1394 to L1414, L1476 to F1498, V1503 to F1525, F1598 to I1618, I1637 to G1657, F1673 to F1693, W1697 to I1717, D1778 to I1798, and T1837 to A1857.

The protein belongs to the glycosyltransferase 48 family. As to quaternary structure, component of the 1,3-beta-glucan synthase (GS) complex, composed of at least the alternate catalytic subunits bgs1, bgs2, bgs3, and bgs4, and a regulatory subunit chr4.

Its subcellular location is the prospore membrane. It carries out the reaction [(1-&gt;3)-beta-D-glucosyl](n) + UDP-alpha-D-glucose = [(1-&gt;3)-beta-D-glucosyl](n+1) + UDP + H(+). In terms of biological role, alternate catalytic subunit of the 1,3-beta-glucan synthase (GS) complex. Synthesizes 1,3-beta-glucan, a major structural component of the yeast cell wall. Has a role in ascospore development where it is required for the assembly of a functional spore wall. The polypeptide is 1,3-beta-glucan synthase component bgs2 (Schizosaccharomyces pombe (strain 972 / ATCC 24843) (Fission yeast)).